The following is a 424-amino-acid chain: F-box protein At2g38590 (424 aa).

The 46-residue stretch at 2–47 folds into the F-box domain; that stretch reads TTMISNLPRVLIEEIFFRVPLKSLRAVRLTCKSWNTLSKSRSFRKL.

This is F-box protein At2g38590 from Arabidopsis thaliana (Mouse-ear cress).